The chain runs to 1090 residues: Protein CHROMATIN REMODELING 24 (1090 aa).

2 disordered regions span residues 1-51 (MAEN…MIKL) and 247-273 (VGKQ…NLDR). The Nuclear localization signal signature appears at 44 to 51 (TKKSMIKL). Residues 256 to 273 (RHFDDNSEDNRQGYNLDR) are compositionally biased toward basic and acidic residues. One can recognise a Helicase ATP-binding domain in the interval 389 to 564 (WSLHTQGKGG…WALFNFSCPG (176 aa)). 402–409 (DDMGLGKT) contributes to the ATP binding site. The DEAH box signature appears at 515 to 518 (DEGH). A Helicase C-terminal domain is found at 736–895 (FIMSLLENLI…IRYFSQQDLR (160 aa)). The stretch at 1043-1069 (DGGAKIQKQIAELTRELKDMKAAERIN) forms a coiled coil.

This sequence belongs to the SNF2/RAD54 helicase family.

The protein localises to the nucleus. Functionally, DNA helicase that acts as an essential component of the spindle assembly checkpoint. Probable chromatin remodeling factor that regulate homologous recombination (HR) and non-homologous recombination (NHR). This chain is Protein CHROMATIN REMODELING 24, found in Arabidopsis thaliana (Mouse-ear cress).